The sequence spans 371 residues: Aspartate-semialdehyde dehydrogenase (371 aa).

Residues 11 to 14, 38 to 39, and Gln75 each bind NADP(+); these read RGMV and TS. A phosphate-binding site is contributed by Arg104. Cys137 serves as the catalytic Acyl-thioester intermediate. Gln164 provides a ligand contact to substrate. 167-168 lines the NADP(+) pocket; sequence SG. Glu243 is a substrate binding site. Lys246 lines the phosphate pocket. Arg269 is a binding site for substrate. The active-site Proton acceptor is the His276. Gln352 is a binding site for NADP(+).

The protein belongs to the aspartate-semialdehyde dehydrogenase family. In terms of assembly, homodimer.

It catalyses the reaction L-aspartate 4-semialdehyde + phosphate + NADP(+) = 4-phospho-L-aspartate + NADPH + H(+). It functions in the pathway amino-acid biosynthesis; L-lysine biosynthesis via DAP pathway; (S)-tetrahydrodipicolinate from L-aspartate: step 2/4. It participates in amino-acid biosynthesis; L-methionine biosynthesis via de novo pathway; L-homoserine from L-aspartate: step 2/3. Its pathway is amino-acid biosynthesis; L-threonine biosynthesis; L-threonine from L-aspartate: step 2/5. Functionally, catalyzes the NADPH-dependent formation of L-aspartate-semialdehyde (L-ASA) by the reductive dephosphorylation of L-aspartyl-4-phosphate. The polypeptide is Aspartate-semialdehyde dehydrogenase (Buchnera aphidicola subsp. Schizaphis graminum (strain Sg)).